The primary structure comprises 320 residues: Aspartate carbamoyltransferase catalytic subunit (320 aa).

Residues Arg68 and Thr69 each contribute to the carbamoyl phosphate site. Lys96 is an L-aspartate binding site. Residues Arg118, His148, and Gln151 each contribute to the carbamoyl phosphate site. L-aspartate is bound by residues Arg181 and Arg236. 2 residues coordinate carbamoyl phosphate: Gly277 and Pro278.

Belongs to the aspartate/ornithine carbamoyltransferase superfamily. ATCase family. As to quaternary structure, heterododecamer (2C3:3R2) of six catalytic PyrB chains organized as two trimers (C3), and six regulatory PyrI chains organized as three dimers (R2).

The enzyme catalyses carbamoyl phosphate + L-aspartate = N-carbamoyl-L-aspartate + phosphate + H(+). The protein operates within pyrimidine metabolism; UMP biosynthesis via de novo pathway; (S)-dihydroorotate from bicarbonate: step 2/3. Its function is as follows. Catalyzes the condensation of carbamoyl phosphate and aspartate to form carbamoyl aspartate and inorganic phosphate, the committed step in the de novo pyrimidine nucleotide biosynthesis pathway. The polypeptide is Aspartate carbamoyltransferase catalytic subunit (Methylibium petroleiphilum (strain ATCC BAA-1232 / LMG 22953 / PM1)).